We begin with the raw amino-acid sequence, 290 residues long: Concanavalin-A (290 aa).

The first 29 residues, 1 to 29, serve as a signal peptide directing secretion; that stretch reads MAISKKSSLFLPIFTFITMFLMVVNKVSS. Asp119 and Arg139 together coordinate a carbohydrate. Asp119 lines the Ca(2+) pocket. A propeptide spanning residues 149 to 163 is cleaved from the precursor; the sequence is VIRNSTTIDFNAAYN. Asn152 carries N-linked (GlcNAc...) asparagine glycosylation. Residues Glu171 and Asp173 each contribute to the Mn(2+) site. Residues Asp173, Tyr175, Asn177, and Asp182 each contribute to the Ca(2+) site. The Mn(2+) site is built by Asp182 and His187. 262-263 is an a carbohydrate binding site; it reads LY. The propeptide occupies 282–290; the sequence is EIPDIATVV.

It belongs to the leguminous lectin family. In terms of assembly, homotetramer. The mature chain consists of residues 164-281 followed by 30-148. To form a mature chain the precursor undergoes further post-translational modification after removal of the signal sequence; cleavage after Asn at positions Asn-148, Asn-163, and Asn-281 is followed by transposition and ligation (By formation of a new peptide bond) of residues 164-281 and 30-148.

Glucose/D-mannose/rhamnose specific lectin. Has hemagglutinating activity towards rabbit erythrocytes. Has mitogenic activity towards murine splenocytes that is inhibited by glucose. Inhibits HIV-1 reverse transcriptase with an IC(50) of 35 uM. Has a potent antiproliferative activity against L1210 leukemia cells in vitro that is not inhibited by glucose. Inhibits translation in cell-free rabbit reticulocyte system with an IC(50) of 2.08 uM. Lacks anti-fungal activity against M.arachidicola, B.cenera and F.oxysporum. The sequence is that of Concanavalin-A from Canavalia gladiata (Sword bean).